Reading from the N-terminus, the 145-residue chain is D-aminoacyl-tRNA deacylase (145 aa).

The short motif at 137–138 (GP) is the Gly-cisPro motif, important for rejection of L-amino acids element.

The protein belongs to the DTD family. As to quaternary structure, homodimer.

The protein resides in the cytoplasm. The catalysed reaction is glycyl-tRNA(Ala) + H2O = tRNA(Ala) + glycine + H(+). It carries out the reaction a D-aminoacyl-tRNA + H2O = a tRNA + a D-alpha-amino acid + H(+). Its function is as follows. An aminoacyl-tRNA editing enzyme that deacylates mischarged D-aminoacyl-tRNAs. Also deacylates mischarged glycyl-tRNA(Ala), protecting cells against glycine mischarging by AlaRS. Acts via tRNA-based rather than protein-based catalysis; rejects L-amino acids rather than detecting D-amino acids in the active site. By recycling D-aminoacyl-tRNA to D-amino acids and free tRNA molecules, this enzyme counteracts the toxicity associated with the formation of D-aminoacyl-tRNA entities in vivo and helps enforce protein L-homochirality. The polypeptide is D-aminoacyl-tRNA deacylase (Pseudomonas putida (strain ATCC 47054 / DSM 6125 / CFBP 8728 / NCIMB 11950 / KT2440)).